Here is a 979-residue protein sequence, read N- to C-terminus: Collagen alpha-2(I) chain (979 aa).

Positions 1–979 (SGGFDFSFLP…FGYEGDFYRA (979 aa)) are disordered. 4 positions are modified to 4-hydroxyproline: proline 10, proline 13, proline 38, and proline 44. Residues 24 to 70 (LGPGPMGLMGPRGPPGASGAPGPQGFQGPAGEPGEPGQTGPAGARGP) show a composition bias toward low complexity. Lysine 99 bears the 5-hydroxylysine; alternate mark. A glycan (O-linked (Gal...) hydroxylysine; alternate) is linked at lysine 99. Low complexity-rich tracts occupy residues 147-176 (VGAP…SAGP), 222-263 (PGAN…AGSK), 272-282 (SAGPQGPPGSS), and 312-331 (RAGV…AGVR). 2 positions are modified to 4-hydroxyproline: proline 334 and proline 337. The span at 363–382 (LPGIDGRPGPIGPAGARGEA) shows a compositional bias: low complexity. Gly residues predominate over residues 427 to 436 (GVQGGKGEQG). A compositionally biased stretch (low complexity) spans 483–500 (PGESGAVGPSGAIGSRGP). Residues 517–527 (GAPGGSGGLPG) show a composition bias toward gly residues. 2 stretches are compositionally biased toward low complexity: residues 550–594 (VGTT…PRGS) and 601–621 (VGPA…QPGA). The span at 622 to 631 (KGERGTKGPK) shows a compositional bias: basic and acidic residues. A compositionally biased stretch (low complexity) spans 639–649 (PTGPVGSAGPA). Residues 659–668 (GSRGDGGPPG) show a composition bias toward gly residues. Residues 669-679 (ATGFPGAAGRT) are compositionally biased toward low complexity. Gly residues predominate over residues 710–724 (GPVGRGETGAGGPPG). Low complexity-rich tracts occupy residues 725 to 759 (FTGE…LGLP) and 767 to 777 (LPGVAGAVGEP). Residues 778 to 788 (GPLGIGPPGAR) show a composition bias toward gly residues. A compositionally biased stretch (low complexity) spans 840–855 (EPGPVGSVGPVGALGP). Basic and acidic residues predominate over residues 865 to 876 (RGDKGEPGDKGP). The span at 949–961 (SGPPGPPGPPGPP) shows a compositional bias: pro residues.

Belongs to the fibrillar collagen family. In terms of assembly, trimers of one alpha 2(I) and two alpha 1(I) chains. Interacts (via C-terminus) with TMEM131 (via PapD-L domain); the interaction is direct and is involved in assembly and TRAPPIII ER-to-Golgi transport complex-dependent secretion of collagen. Prolines at the third position of the tripeptide repeating unit (G-X-Y) are hydroxylated in some or all of the chains. In terms of tissue distribution, expressed in bones.

Its subcellular location is the secreted. The protein localises to the extracellular space. It localises to the extracellular matrix. Functionally, type I collagen is a member of group I collagen (fibrillar forming collagen). In Bradypus variegatus (Brown-throated three-fingered sloth), this protein is Collagen alpha-2(I) chain.